The chain runs to 177 residues: MNASHPAVHPVGVPPAVAGQLPPRMRMKEIQGMPGTIGGLLLRLGQFCFALVAFSIMVSIENFSTVTAFCYLVAATVLQCLWSLALAIIDGYALLVKRSLRNSLLVSLLVVGDGVTATLTFAAACASAGITVLIGNDLRQCKENHCARYETATALAFLSWFMVSLSFILTFWLLATR.

Residues 1 to 36 lie on the Cytoplasmic side of the membrane; that stretch reads MNASHPAVHPVGVPPAVAGQLPPRMRMKEIQGMPGT. Residues 37–57 form a helical membrane-spanning segment; it reads IGGLLLRLGQFCFALVAFSIM. Over 58–68 the chain is Extracellular; that stretch reads VSIENFSTVTA. The N-linked (GlcNAc...) asparagine glycan is linked to Asn62. Residues 69–89 traverse the membrane as a helical segment; it reads FCYLVAATVLQCLWSLALAII. The Cytoplasmic segment spans residues 90-103; that stretch reads DGYALLVKRSLRNS. The chain crosses the membrane as a helical span at residues 104–124; sequence LLVSLLVVGDGVTATLTFAAA. The Extracellular portion of the chain corresponds to 125–153; it reads CASAGITVLIGNDLRQCKENHCARYETAT. Residues 154–174 traverse the membrane as a helical segment; sequence ALAFLSWFMVSLSFILTFWLL. Residues 175-177 lie on the Cytoplasmic side of the membrane; sequence ATR.

This sequence belongs to the Casparian strip membrane proteins (CASP) family. In terms of assembly, homodimer and heterodimers.

It localises to the cell membrane. The polypeptide is CASP-like protein 5A2 (Ginkgo biloba (Ginkgo)).